Consider the following 412-residue polypeptide: Glucose-1-phosphate adenylyltransferase (412 aa).

Alpha-D-glucose 1-phosphate contacts are provided by residues Tyr98, Gly163, Glu178–Lys179, and Ser189.

The protein belongs to the bacterial/plant glucose-1-phosphate adenylyltransferase family. In terms of assembly, homotetramer.

It carries out the reaction alpha-D-glucose 1-phosphate + ATP + H(+) = ADP-alpha-D-glucose + diphosphate. It functions in the pathway glycan biosynthesis; glycogen biosynthesis. Involved in the biosynthesis of ADP-glucose, a building block required for the elongation reactions to produce glycogen. Catalyzes the reaction between ATP and alpha-D-glucose 1-phosphate (G1P) to produce pyrophosphate and ADP-Glc. This is Glucose-1-phosphate adenylyltransferase from Thermosipho melanesiensis (strain DSM 12029 / CIP 104789 / BI429).